The following is a 176-amino-acid chain: Ribosome maturation factor RimM (176 aa).

The 74-residue stretch at 93–166 (EGEYYHADLI…RVVIELPAEI (74 aa)) folds into the PRC barrel domain.

Belongs to the RimM family. Binds ribosomal protein uS19.

The protein resides in the cytoplasm. Functionally, an accessory protein needed during the final step in the assembly of 30S ribosomal subunit, possibly for assembly of the head region. Essential for efficient processing of 16S rRNA. May be needed both before and after RbfA during the maturation of 16S rRNA. It has affinity for free ribosomal 30S subunits but not for 70S ribosomes. The polypeptide is Ribosome maturation factor RimM (Rhodopseudomonas palustris (strain BisB18)).